A 680-amino-acid polypeptide reads, in one-letter code: WD repeat-containing protein 48 homolog (680 aa).

WD repeat units follow at residues Gln26–Tyr65, His71–Thr110, Thr113–Ala152, Gly164–Lys203, Gly206–Thr245, Val248–Leu287, Glu290–Leu329, and Lys350–Thr389. The tract at residues Thr594–Leu618 is disordered. A compositionally biased stretch (low complexity) spans Ser596–Ser609.

The protein belongs to the WD repeat WDR48 family. As to quaternary structure, catalytic component of the Usp12-46 deubiquitylase complex consisting of Usp12-46, Wdr20 and Uaf1; regulatory subunit that, together wtih Wdr20, stabilizes Usp12-46. The Usp12-46 deubiquitylase complex associates with arr/arrow; the interaction leads to deubiquitination and stabilization of arr/arrow.

In terms of biological role, regulatory component of the Usp12-46 deubiquitylase complex. activates deubiquitination by increasing the catalytic turnover without increasing the affinity of deubiquitinating enzymes for the substrate. The complex deubiquitylates the wg/wingless-signaling receptor arr/arrow, which stabilizes the receptor and increases its concentration at the cell surface; this enhances the sensitivity of cells to wg/wingless-signal stimulation. This increases the amplitude and spatial range of the signaling response to the wg/wingless morphogen gradient, facilitating the precise concentration-dependent regulation of its target genes. Together with Wdr20 and Usp12-46 required for wg/wingless-mediated signaling in the wing imaginal disc and for wg/wingless-dependent regulation of intestinal stem cell proliferation. The sequence is that of WD repeat-containing protein 48 homolog from Drosophila persimilis (Fruit fly).